A 668-amino-acid polypeptide reads, in one-letter code: Bestrophin-3 (668 aa).

Residues 1–31 lie on the Cytoplasmic side of the membrane; it reads MTVTYSSKVANATFFGFHRLLLKWRGSIYKL. Ca(2+) is bound at residue Ala-10. Residues 32 to 51 traverse the membrane as a helical segment; the sequence is LYREFIVFAVLYTAISLVYR. The Extracellular portion of the chain corresponds to 52-60; the sequence is LLLTGVQKR. A helical transmembrane segment spans residues 61–82; sequence YFEKLSIYCDRYAEQIPVTFVL. The Cytoplasmic portion of the chain corresponds to 83–237; it reads GFYVTLVVNR…DWVGIPLVYT (155 aa). The chain crosses the membrane as a helical span at residues 238–255; that stretch reads QVVTLAVYTFFFACLIGR. Topologically, residues 256 to 274 are extracellular; the sequence is QFLDPTKGYAGHDLDLYIP. Residues 275–288 traverse the membrane as a helical segment; the sequence is IFTLLQFFFYAGWL. Residues 289 to 668 are Cytoplasmic-facing; sequence KVAEQLINPF…LNKETEESPK (380 aa). 4 residues coordinate Ca(2+): Gln-293, Asn-296, Asp-301, and Asp-304. Disordered stretches follow at residues 400–454, 473–493, and 532–570; these read SAHE…KKSC, RETS…VRTS, and TGVQ…VSAS. The segment covering 425–436 has biased composition (basic and acidic residues); it reads PRDDLSPARDLL. Low complexity predominate over residues 475–489; that stretch reads TSQTSTLQSLTPQSS. Residues 532-545 show a composition bias toward polar residues; sequence TGVQPSKTEQQQGP.

This sequence belongs to the anion channel-forming bestrophin (TC 1.A.46) family. Calcium-sensitive chloride channel subfamily. In terms of tissue distribution, present in skeletal muscle and weakly in brain, spinal cord, bone marrow and retina.

It is found in the cell membrane. The enzyme catalyses chloride(in) = chloride(out). In terms of biological role, ligand-gated anion channel that allows the movement of chloride monoatomic anions across cell membranes when activated by calcium (Ca2+). This chain is Bestrophin-3, found in Homo sapiens (Human).